The primary structure comprises 456 residues: MLNSAMSVVILAAGKGTRMYSDIPKVLHTLAGKPMVQHVIDAATKLGAAQVHLVYGHGGELLKQTLKDDKLNWVLQAEQLGTGHAMQKAAPFFSDDEDILMLYGDVPLISVETLQRLRDAKPQGGIGLLTVKLDDPSGYGRITRENGKVTGIVEHKDATDEQRQIQEINTGILIANGADLKRWLSKLTNNNAQGEYYITDIIALAYQEGREIAAVYPARISETDGVNNRLQLSRLERIYQAEQAEKLLLSGVMLRDPARFDLRGTLHCGMDVEIDANVIIEGYVTLGHRVKIGAGCIIKNSVIGDDCEISPYSVVEDAHLEAACTIGPFARLRPGAELLAGAHVGNFVEMKKARLGKGSKAGHLTYLGDAEIGDNVNIGAGTITCNYDGANKFKTVIGDDVFVGSDTQLVAPVTVGKGATIAAGTTVTRNVADNELVLSRVPQVHKQGWQRPVKKK.

The tract at residues 1–229 is pyrophosphorylase; sequence MLNSAMSVVI…ISETDGVNNR (229 aa). UDP-N-acetyl-alpha-D-glucosamine contacts are provided by residues 11–14, K25, Q76, 81–82, 103–105, G140, E154, N169, and N227; these read LAAG, GT, and YGD. D105 provides a ligand contact to Mg(2+). Residue N227 participates in Mg(2+) binding. The tract at residues 230 to 250 is linker; that stretch reads LQLSRLERIYQAEQAEKLLLS. Positions 251 to 456 are N-acetyltransferase; the sequence is GVMLRDPARF…QGWQRPVKKK (206 aa). 2 residues coordinate UDP-N-acetyl-alpha-D-glucosamine: R333 and K351. H363 acts as the Proton acceptor in catalysis. UDP-N-acetyl-alpha-D-glucosamine is bound by residues Y366 and N377. Residues A380, 386 to 387, S405, A423, and R440 each bind acetyl-CoA; that span reads NY.

This sequence in the N-terminal section; belongs to the N-acetylglucosamine-1-phosphate uridyltransferase family. The protein in the C-terminal section; belongs to the transferase hexapeptide repeat family. In terms of assembly, homotrimer. Mg(2+) is required as a cofactor.

The protein resides in the cytoplasm. It carries out the reaction alpha-D-glucosamine 1-phosphate + acetyl-CoA = N-acetyl-alpha-D-glucosamine 1-phosphate + CoA + H(+). It catalyses the reaction N-acetyl-alpha-D-glucosamine 1-phosphate + UTP + H(+) = UDP-N-acetyl-alpha-D-glucosamine + diphosphate. It participates in nucleotide-sugar biosynthesis; UDP-N-acetyl-alpha-D-glucosamine biosynthesis; N-acetyl-alpha-D-glucosamine 1-phosphate from alpha-D-glucosamine 6-phosphate (route II): step 2/2. It functions in the pathway nucleotide-sugar biosynthesis; UDP-N-acetyl-alpha-D-glucosamine biosynthesis; UDP-N-acetyl-alpha-D-glucosamine from N-acetyl-alpha-D-glucosamine 1-phosphate: step 1/1. Its pathway is bacterial outer membrane biogenesis; LPS lipid A biosynthesis. In terms of biological role, catalyzes the last two sequential reactions in the de novo biosynthetic pathway for UDP-N-acetylglucosamine (UDP-GlcNAc). The C-terminal domain catalyzes the transfer of acetyl group from acetyl coenzyme A to glucosamine-1-phosphate (GlcN-1-P) to produce N-acetylglucosamine-1-phosphate (GlcNAc-1-P), which is converted into UDP-GlcNAc by the transfer of uridine 5-monophosphate (from uridine 5-triphosphate), a reaction catalyzed by the N-terminal domain. The sequence is that of Bifunctional protein GlmU from Salmonella gallinarum (strain 287/91 / NCTC 13346).